A 1657-amino-acid chain; its full sequence is Alsin (1657 aa).

RCC1 repeat units follow at residues 60–109, 110–168, and 169–219; these read GEVY…VTDN, GVAY…LSIS, and REIW…LVQC. The disordered stretch occupies residues 432-481; it reads TGAQAGSSAIGPEGLKDSREEQVKQESMQGKKSSSLVDIREEETEGGSRR. Over residues 445 to 455 the composition is skewed to basic and acidic residues; that stretch reads GLKDSREEQVK. Residues 456 to 467 show a composition bias toward polar residues; it reads QESMQGKKSSSL. 4 positions are modified to phosphoserine: Ser465, Ser466, Ser483, and Ser492. A Phosphothreonine modification is found at Thr510. RCC1 repeat units follow at residues 526–577 and 578–628; these read TEVW…LTAK and SQVY…LVDT. Lys533 carries the post-translational modification N6-acetyllysine. The DH domain occupies 690–885; the sequence is GYIASLHELA…ECLALHLGRK (196 aa). The PH domain occupies 901–1007; it reads GKMTDSLRKP…RAISQAVDQA (107 aa). MORN repeat units follow at residues 1049–1071, 1072–1094, 1100–1122, 1123–1145, 1151–1173, 1175–1197, 1198–1220, and 1221–1244; these read YDGR…DGKM, YSGM…NKAM, YVGH…SGEV, FEGC…KLTS, FIGQ…TRGE, YMGM…FGLY, YEGN…DDTI, and YEGE…NGDY. The residue at position 1335 (Ser1335) is a Phosphoserine. In terms of domain architecture, VPS9 spans 1513–1657; it reads KQPDIALLGF…YYQIQREKLN (145 aa).

In terms of assembly, forms a heteromeric complex with ALS2CL. Interacts with ALS2CL.

Its function is as follows. May act as a GTPase regulator. Controls survival and growth of spinal motoneurons. This Pan troglodytes (Chimpanzee) protein is Alsin (ALS2).